Reading from the N-terminus, the 253-residue chain is MRHEENYLDLNNLPDDFSKDGNKQALEEGSSSGQRKKKGSKEGKDESGKVYECRFCSLKFCKSQALGGHMNRHRQERETETLNQARQLVYRNDTITPPGISPFGYHHTTDPTIYRSVYSSPMIYPGSSSTNLVPQPPMPPPPPPYPYSSNQYSPHNHFNDYYLNPSFRGSRSISPSPNLPTTTTVDYMADSPVEPGYTCVGAPIGPTGFPIRGPSIVRAPLEPPQGRDGDASRQRLDHSLRFPINRFQDHHSL.

Positions 1-46 (MRHEENYLDLNNLPDDFSKDGNKQALEEGSSSGQRKKKGSKEGKDE) are disordered. Over residues 16 to 26 (DFSKDGNKQAL) the composition is skewed to basic and acidic residues. The segment at 51 to 73 (YECRFCSLKFCKSQALGGHMNRH) adopts a C2H2-type zinc-finger fold.

In terms of assembly, interacts with GATA18/HAN. In terms of tissue distribution, expressed in the emerging leaf, sepal, petal, stamen and carpel primordia. Not expressed in the apical shoot meristem (SAM).

The protein resides in the nucleus. Its function is as follows. Controls the morphogenesis of lateral organs. Functions in lateral organ shape and is sufficient to induce proliferation and growth of lateral organ tissue. Is necessary and sufficient for bract formation, but its expression is excluded from the cryptic bract, which could be a cause of bractless flowers in Arabidopsis. Participates with FIL and YAB3 in regulating valve margin development. Functions with JGL to define stamen and carpel shape. Functions with AS1 and AS2 in the sepal and petal primordia to repress boundary-specifying genes for normal development of the organs. The sequence is that of Zinc finger protein JAGGED (JAG) from Arabidopsis thaliana (Mouse-ear cress).